Reading from the N-terminus, the 120-residue chain is MGVTFEFVYILVLLAISTGLSVILFFLGYFLMFKVAYEDKLMGYECGFDPFGNARGEFDIRFYLVAILFLIFDLEITFLFPFSVSIMSMTLLSYSLMLIFLIILTIGFIYEIKKGALDWS.

3 consecutive transmembrane segments (helical) span residues 7 to 27 (FVYILVLLAISTGLSVILFFL), 62 to 82 (FYLVAILFLIFDLEITFLFPF), and 89 to 109 (MTLLSYSLMLIFLIILTIGFI).

Belongs to the complex I subunit 3 family.

It is found in the mitochondrion membrane. It catalyses the reaction a ubiquinone + NADH + 5 H(+)(in) = a ubiquinol + NAD(+) + 4 H(+)(out). Functionally, core subunit of the mitochondrial membrane respiratory chain NADH dehydrogenase (Complex I) that is believed to belong to the minimal assembly required for catalysis. Complex I functions in the transfer of electrons from NADH to the respiratory chain. The immediate electron acceptor for the enzyme is believed to be ubiquinone. This Dictyostelium discoideum (Social amoeba) protein is NADH-ubiquinone oxidoreductase chain 3 (nad3).